The sequence spans 623 residues: uncharacterized protein (623 aa).

Positions 1–18 are enriched in polar residues; that stretch reads MSSRSGSADTFTQRSDSN. 7 disordered regions span residues 1–107, 132–181, 207–231, 298–349, 384–464, 533–553, and 568–623; these read MSSR…DPFT, LGSD…EIGA, SWNL…ADTD, REET…ESDQ, RKSV…DRNV, SIND…PPET, and VESR…TKGD. Basic and acidic residues predominate over residues 25–34; the sequence is ISLDDVRDNN. A compositionally biased stretch (low complexity) spans 39 to 49; it reads SSSGISTTGSS. Polar residues predominate over residues 132 to 144; it reads LGSDTARPTSNGG. A compositionally biased stretch (low complexity) spans 165 to 177; it reads STSTWGPSGPTTP. Residues 328-339 show a composition bias toward polar residues; it reads EKSTFSRISEQP. A compositionally biased stretch (low complexity) spans 400–417; sequence QTPTISTASSPIQPSSSP. Residues 533 to 548 show a composition bias toward polar residues; it reads SINDLQQGTSSSQNQA. Residues 604 to 614 are compositionally biased toward low complexity; the sequence is PSASPSTSRTR.

This is an uncharacterized protein from Emericella nidulans (strain FGSC A4 / ATCC 38163 / CBS 112.46 / NRRL 194 / M139) (Aspergillus nidulans).